Reading from the N-terminus, the 301-residue chain is MLTFQQIILTLQEYWDKQGCALLQPYDMEVGAGTSHTATFLRAIGPEPWRAAYVQPSRRPKDGRYGENPNRLQHYYQYQVVLKPAPPEILDLYIGSLKALGIDPAQHDIRFVEDDWENPTLGAWGLGWEVWLNGMEVTQFTYFQQVGGLDCTPTTGEITYGLERLAMYLQNVESVYDLVWTEGANGQRVLYRDVFHQNEVEQSTYNFEHSSAEMLFAHFNDYEAEAKRLMEVPLALPAYEAALKAAHTFNMLDARGAISVTERAAYIGRIRNLSRAVAQAYYDSRERLGFPMLRNKAGEAA.

It belongs to the class-II aminoacyl-tRNA synthetase family. As to quaternary structure, tetramer of two alpha and two beta subunits.

Its subcellular location is the cytoplasm. The catalysed reaction is tRNA(Gly) + glycine + ATP = glycyl-tRNA(Gly) + AMP + diphosphate. The protein is Glycine--tRNA ligase alpha subunit of Bordetella avium (strain 197N).